The following is a 226-amino-acid chain: Glutathione peroxidase 3 (226 aa).

The signal sequence occupies residues 1-24 (MARLLQASCLLSLLLAGFVPQSRG). Residue Sec-73 is part of the active site. Sec-73 is a non-standard amino acid (selenocysteine).

This sequence belongs to the glutathione peroxidase family. As to quaternary structure, homotetramer. As to expression, secreted in plasma.

The protein localises to the secreted. The catalysed reaction is 2 glutathione + H2O2 = glutathione disulfide + 2 H2O. The enzyme catalyses tert-butyl hydroperoxide + 2 glutathione = tert-butanol + glutathione disulfide + H2O. Protects cells and enzymes from oxidative damage, by catalyzing the reduction of hydrogen peroxide, lipid peroxides and organic hydroperoxide, by glutathione. The polypeptide is Glutathione peroxidase 3 (Hylobates lar (Lar gibbon)).